The chain runs to 751 residues: Photosystem I P700 chlorophyll a apoprotein A1 (751 aa).

Transmembrane regions (helical) follow at residues 71–94 (VFSA…FHGA), 157–180 (LYCT…FHYH), 196–220 (LNHH…HVSL), 292–310 (TAHH…GHMY), 347–370 (WHAQ…HHMY), 386–412 (LSLF…IFLV), 434–456 (AIIS…LYIH), and 532–550 (FLVH…LILL). Residues Cys574 and Cys583 each contribute to the [4Fe-4S] cluster site. 2 helical membrane passes run 590 to 611 (HVFL…HFSW) and 665 to 687 (LSAY…MFLF). His676 serves as a coordination point for chlorophyll a'. Positions 684 and 692 each coordinate chlorophyll a. Residue Trp693 participates in phylloquinone binding. Residues 725–745 (AVGVAHYLLGGIVTTWAFFLA) traverse the membrane as a helical segment.

The protein belongs to the PsaA/PsaB family. The PsaA/B heterodimer binds the P700 chlorophyll special pair and subsequent electron acceptors. PSI consists of a core antenna complex that captures photons, and an electron transfer chain that converts photonic excitation into a charge separation. The eukaryotic PSI reaction center is composed of at least 11 subunits. P700 is a chlorophyll a/chlorophyll a' dimer, A0 is one or more chlorophyll a, A1 is one or both phylloquinones and FX is a shared 4Fe-4S iron-sulfur center. serves as cofactor.

The protein resides in the plastid. It localises to the chloroplast thylakoid membrane. The enzyme catalyses reduced [plastocyanin] + hnu + oxidized [2Fe-2S]-[ferredoxin] = oxidized [plastocyanin] + reduced [2Fe-2S]-[ferredoxin]. In terms of biological role, psaA and PsaB bind P700, the primary electron donor of photosystem I (PSI), as well as the electron acceptors A0, A1 and FX. PSI is a plastocyanin-ferredoxin oxidoreductase, converting photonic excitation into a charge separation, which transfers an electron from the donor P700 chlorophyll pair to the spectroscopically characterized acceptors A0, A1, FX, FA and FB in turn. Oxidized P700 is reduced on the lumenal side of the thylakoid membrane by plastocyanin. This is Photosystem I P700 chlorophyll a apoprotein A1 from Welwitschia mirabilis (Tree tumbo).